Consider the following 354-residue polypeptide: Chorismate synthase (354 aa).

Positions 48 and 54 each coordinate NADP(+). Residues 125–127, 238–239, Gly-278, 293–297, and Arg-319 contribute to the FMN site; these read RSS, NA, and KPTSS.

It belongs to the chorismate synthase family. In terms of assembly, homotetramer. FMNH2 serves as cofactor.

It carries out the reaction 5-O-(1-carboxyvinyl)-3-phosphoshikimate = chorismate + phosphate. Its pathway is metabolic intermediate biosynthesis; chorismate biosynthesis; chorismate from D-erythrose 4-phosphate and phosphoenolpyruvate: step 7/7. Catalyzes the anti-1,4-elimination of the C-3 phosphate and the C-6 proR hydrogen from 5-enolpyruvylshikimate-3-phosphate (EPSP) to yield chorismate, which is the branch point compound that serves as the starting substrate for the three terminal pathways of aromatic amino acid biosynthesis. This reaction introduces a second double bond into the aromatic ring system. The protein is Chorismate synthase of Blochmanniella pennsylvanica (strain BPEN).